The chain runs to 498 residues: Phenylalanine--tRNA ligase alpha subunit (498 aa).

Residues Thr328, 372–374 (QVE), and Tyr412 contribute to the L-phenylalanine site. Glu414 is a Mg(2+) binding site. Phe438 lines the L-phenylalanine pocket.

This sequence belongs to the class-II aminoacyl-tRNA synthetase family. Phe-tRNA synthetase alpha subunit type 2 subfamily. As to quaternary structure, tetramer of two alpha and two beta subunits. Mg(2+) serves as cofactor.

The protein resides in the cytoplasm. The catalysed reaction is tRNA(Phe) + L-phenylalanine + ATP = L-phenylalanyl-tRNA(Phe) + AMP + diphosphate + H(+). The polypeptide is Phenylalanine--tRNA ligase alpha subunit (Drosophila melanogaster (Fruit fly)).